The primary structure comprises 267 residues: Tryptophan synthase alpha chain (267 aa).

Residues Glu43 and Asp54 each act as proton acceptor in the active site.

The protein belongs to the TrpA family. In terms of assembly, tetramer of two alpha and two beta chains.

It carries out the reaction (1S,2R)-1-C-(indol-3-yl)glycerol 3-phosphate + L-serine = D-glyceraldehyde 3-phosphate + L-tryptophan + H2O. It functions in the pathway amino-acid biosynthesis; L-tryptophan biosynthesis; L-tryptophan from chorismate: step 5/5. In terms of biological role, the alpha subunit is responsible for the aldol cleavage of indoleglycerol phosphate to indole and glyceraldehyde 3-phosphate. This is Tryptophan synthase alpha chain from Bacillus licheniformis (strain ATCC 14580 / DSM 13 / JCM 2505 / CCUG 7422 / NBRC 12200 / NCIMB 9375 / NCTC 10341 / NRRL NRS-1264 / Gibson 46).